A 235-amino-acid polypeptide reads, in one-letter code: 5'-methylthioadenosine/S-adenosylhomocysteine nucleosidase (235 aa).

Glutamate 12 serves as the catalytic Proton acceptor. Substrate is bound by residues glycine 78, isoleucine 152, and 173 to 174 (ME). Aspartate 197 (proton donor) is an active-site residue.

The protein belongs to the PNP/UDP phosphorylase family. MtnN subfamily. Homodimer.

It carries out the reaction S-adenosyl-L-homocysteine + H2O = S-(5-deoxy-D-ribos-5-yl)-L-homocysteine + adenine. The catalysed reaction is S-methyl-5'-thioadenosine + H2O = 5-(methylsulfanyl)-D-ribose + adenine. It catalyses the reaction 5'-deoxyadenosine + H2O = 5-deoxy-D-ribose + adenine. The protein operates within amino-acid biosynthesis; L-methionine biosynthesis via salvage pathway; S-methyl-5-thio-alpha-D-ribose 1-phosphate from S-methyl-5'-thioadenosine (hydrolase route): step 1/2. Its function is as follows. Catalyzes the irreversible cleavage of the glycosidic bond in both 5'-methylthioadenosine (MTA) and S-adenosylhomocysteine (SAH/AdoHcy) to adenine and the corresponding thioribose, 5'-methylthioribose and S-ribosylhomocysteine, respectively. Also cleaves 5'-deoxyadenosine, a toxic by-product of radical S-adenosylmethionine (SAM) enzymes, into 5-deoxyribose and adenine. Thus, is required for in vivo function of the radical SAM enzymes biotin synthase and lipoic acid synthase, that are inhibited by 5'-deoxyadenosine accumulation. This chain is 5'-methylthioadenosine/S-adenosylhomocysteine nucleosidase, found in Proteus mirabilis (strain HI4320).